The following is a 426-amino-acid chain: UDP-N-acetylmuramoylalanine--D-glutamate ligase (426 aa).

112-118 is an ATP binding site; the sequence is GSVGKST.

Belongs to the MurCDEF family.

The protein resides in the cytoplasm. The enzyme catalyses UDP-N-acetyl-alpha-D-muramoyl-L-alanine + D-glutamate + ATP = UDP-N-acetyl-alpha-D-muramoyl-L-alanyl-D-glutamate + ADP + phosphate + H(+). It functions in the pathway cell wall biogenesis; peptidoglycan biosynthesis. In terms of biological role, cell wall formation. Catalyzes the addition of glutamate to the nucleotide precursor UDP-N-acetylmuramoyl-L-alanine (UMA). This Thermosipho melanesiensis (strain DSM 12029 / CIP 104789 / BI429) protein is UDP-N-acetylmuramoylalanine--D-glutamate ligase.